The following is a 176-amino-acid chain: Ribosome maturation factor RimM (176 aa).

In terms of domain architecture, PRC barrel spans 93-166 (EGEYYHADLI…RVVIEMPGEI (74 aa)).

The protein belongs to the RimM family. Binds ribosomal protein uS19.

Its subcellular location is the cytoplasm. Functionally, an accessory protein needed during the final step in the assembly of 30S ribosomal subunit, possibly for assembly of the head region. Essential for efficient processing of 16S rRNA. May be needed both before and after RbfA during the maturation of 16S rRNA. It has affinity for free ribosomal 30S subunits but not for 70S ribosomes. The sequence is that of Ribosome maturation factor RimM from Rhodopseudomonas palustris (strain BisA53).